A 230-amino-acid polypeptide reads, in one-letter code: Thioredoxin domain-containing protein PLP3A (230 aa).

Residues 89 to 173 (VSEGDFLGEV…GVAMDRLVGF (85 aa)) enclose the Thioredoxin domain. The disordered stretch occupies residues 197-230 (LSKKKKEEDDEDAEYQESIRRSVRSSENLDSDSD).

Belongs to the phosducin family. In terms of assembly, interacts with TUBB2, TUBB3, TUBB4 and TUBB5. In terms of tissue distribution, expressed in embryos, shoot meristems, leaf primordia, root meristems, floral meristems and young floral buds.

It is found in the cytoplasm. Its subcellular location is the nucleus. In terms of biological role, tubulin-binding protein involved in microtubule formation. This is Thioredoxin domain-containing protein PLP3A (PLP3A) from Arabidopsis thaliana (Mouse-ear cress).